Consider the following 492-residue polypeptide: Ferruginol synthase (492 aa).

A helical membrane pass occupies residues 1–21 (MDPFPLVAAALFIAATWFITF). Residue Cys-436 participates in heme binding.

Belongs to the cytochrome P450 family. The cofactor is heme. Expressed in leaf glandular trichomes.

The protein localises to the membrane. The catalysed reaction is abieta-8,11,13-triene + reduced [NADPH--hemoprotein reductase] + O2 = ferruginol + oxidized [NADPH--hemoprotein reductase] + H2O + H(+). The enzyme catalyses ferruginol + reduced [NADPH--hemoprotein reductase] + O2 = 11-hydroxyferruginol + oxidized [NADPH--hemoprotein reductase] + H2O + H(+). It catalyses the reaction miltiradiene + 2 reduced [NADPH--hemoprotein reductase] + 2 O2 = 11-oxomiltiradiene + 2 oxidized [NADPH--hemoprotein reductase] + 3 H2O + 2 H(+). Its pathway is secondary metabolite biosynthesis; terpenoid biosynthesis. Monooxygenase involved in the biosynthesis of labdane-related diterpenes natural products. Catalyzes the oxidation of abietatriene to produce ferruginol. Catalyzes the oxidation of ferruginol at C-12 to produce 11-hydroxyferruginol. Ferruginol and 11-hydroxyferruginol are intermediates in the biosynthesis of carnosate, a potent antioxidant. May also convert miltiradiene into 11-oxomiltiradiene. In Salvia fruticosa (Greek sage), this protein is Ferruginol synthase.